The primary structure comprises 145 residues: Allergen Sin a 1 (145 aa).

Residues 34–62 form a disordered region; that stretch reads SGSGPSWTLDDEFDFEDDMENPQGPQQRP. Positions 40 to 54 are excised as a propeptide; the sequence is WTLDDEFDFEDDMEN. The segment covering 42–53 has biased composition (acidic residues); sequence LDDEFDFEDDME.

It belongs to the 2S seed storage albumins family. As to quaternary structure, the protein consists of two chains linked by disulfide bonds.

Functionally, this is a 2S seed storage protein. The chain is Allergen Sin a 1 from Sinapis alba (White mustard).